We begin with the raw amino-acid sequence, 355 residues long: Phosphoribosylformylglycinamidine cyclo-ligase (355 aa).

Belongs to the AIR synthase family.

It localises to the cytoplasm. It catalyses the reaction 2-formamido-N(1)-(5-O-phospho-beta-D-ribosyl)acetamidine + ATP = 5-amino-1-(5-phospho-beta-D-ribosyl)imidazole + ADP + phosphate + H(+). It functions in the pathway purine metabolism; IMP biosynthesis via de novo pathway; 5-amino-1-(5-phospho-D-ribosyl)imidazole from N(2)-formyl-N(1)-(5-phospho-D-ribosyl)glycinamide: step 2/2. The sequence is that of Phosphoribosylformylglycinamidine cyclo-ligase from Paraburkholderia phytofirmans (strain DSM 17436 / LMG 22146 / PsJN) (Burkholderia phytofirmans).